The following is a 454-amino-acid chain: Histidine--tRNA ligase (454 aa).

It belongs to the class-II aminoacyl-tRNA synthetase family. Homodimer.

Its subcellular location is the cytoplasm. The catalysed reaction is tRNA(His) + L-histidine + ATP = L-histidyl-tRNA(His) + AMP + diphosphate + H(+). This Porphyromonas gingivalis (strain ATCC BAA-308 / W83) protein is Histidine--tRNA ligase.